An 884-amino-acid chain; its full sequence is Translation initiation factor IF-2 (884 aa).

Composition is skewed to basic and acidic residues over residues 110–153 and 193–234; these read AKAK…KEKA and KQKE…DHHV. The disordered stretch occupies residues 110 to 291; that stretch reads AKAKAEADAK…NRSTAPQSMA (182 aa). The span at 255-268 shows a compositional bias: basic residues; it reads GRRARNKPTNKKRG. The region spanning 384–553 is the tr-type G domain; the sequence is TRAPVVTIMG…LLQSEVLELK (170 aa). A G1 region spans residues 393–400; it reads GHVDHGKT. 393–400 contacts GTP; that stretch reads GHVDHGKT. The tract at residues 418 to 422 is G2; sequence GITQH. The segment at 439-442 is G3; sequence DTPG. GTP-binding positions include 439–443 and 493–496; these read DTPGH and NKMD. Residues 493-496 are G4; the sequence is NKMD. A G5 region spans residues 529–531; that stretch reads SAK.

It belongs to the TRAFAC class translation factor GTPase superfamily. Classic translation factor GTPase family. IF-2 subfamily.

The protein resides in the cytoplasm. Functionally, one of the essential components for the initiation of protein synthesis. Protects formylmethionyl-tRNA from spontaneous hydrolysis and promotes its binding to the 30S ribosomal subunits. Also involved in the hydrolysis of GTP during the formation of the 70S ribosomal complex. This chain is Translation initiation factor IF-2, found in Shewanella denitrificans (strain OS217 / ATCC BAA-1090 / DSM 15013).